The primary structure comprises 214 residues: tRNA (guanine-N(7)-)-methyltransferase (214 aa).

4 residues coordinate S-adenosyl-L-methionine: E44, E69, D96, and D118. Residue D118 is part of the active site. K122 lines the substrate pocket. The tract at residues 124–129 (RHEKRR) is interaction with RNA. Substrate-binding positions include D154 and 192–195 (TEYE).

Belongs to the class I-like SAM-binding methyltransferase superfamily. TrmB family.

The catalysed reaction is guanosine(46) in tRNA + S-adenosyl-L-methionine = N(7)-methylguanosine(46) in tRNA + S-adenosyl-L-homocysteine. It participates in tRNA modification; N(7)-methylguanine-tRNA biosynthesis. Its function is as follows. Catalyzes the formation of N(7)-methylguanine at position 46 (m7G46) in tRNA. In Lacticaseibacillus casei (strain BL23) (Lactobacillus casei), this protein is tRNA (guanine-N(7)-)-methyltransferase.